The primary structure comprises 594 residues: Glutamate decarboxylase 1 (594 aa).

Low complexity predominate over residues methionine 1–serine 13. A disordered region spans residues methionine 1 to asparagine 23. A Phosphoserine modification is found at serine 78. Glutamine 190–serine 192 is a binding site for 4-aminobutanoate. Lysine 405 is subject to N6-(pyridoxal phosphate)lysine. Arginine 567 lines the 4-aminobutanoate pocket.

Belongs to the group II decarboxylase family. Homodimer. The cofactor is pyridoxal 5'-phosphate.

The catalysed reaction is L-glutamate + H(+) = 4-aminobutanoate + CO2. In terms of biological role, catalyzes the synthesis of the inhibitory neurotransmitter gamma-aminobutyric acid (GABA) with pyridoxal 5'-phosphate as cofactor. This chain is Glutamate decarboxylase 1 (GAD1), found in Pan troglodytes (Chimpanzee).